Here is a 247-residue protein sequence, read N- to C-terminus: Ribonuclease PH (247 aa).

Residues arginine 87 and 125 to 127 (GTR) each bind phosphate.

This sequence belongs to the RNase PH family. As to quaternary structure, homohexameric ring arranged as a trimer of dimers.

It carries out the reaction tRNA(n+1) + phosphate = tRNA(n) + a ribonucleoside 5'-diphosphate. Phosphorolytic 3'-5' exoribonuclease that plays an important role in tRNA 3'-end maturation. Removes nucleotide residues following the 3'-CCA terminus of tRNAs; can also add nucleotides to the ends of RNA molecules by using nucleoside diphosphates as substrates, but this may not be physiologically important. Probably plays a role in initiation of 16S rRNA degradation (leading to ribosome degradation) during starvation. In Frankia casuarinae (strain DSM 45818 / CECT 9043 / HFP020203 / CcI3), this protein is Ribonuclease PH.